Here is a 179-residue protein sequence, read N- to C-terminus: Probable chorismate pyruvate-lyase (179 aa).

Substrate is bound by residues Arg-82, Leu-120, and Glu-165.

The protein belongs to the UbiC family.

Its subcellular location is the cytoplasm. It carries out the reaction chorismate = 4-hydroxybenzoate + pyruvate. It participates in cofactor biosynthesis; ubiquinone biosynthesis. Removes the pyruvyl group from chorismate, with concomitant aromatization of the ring, to provide 4-hydroxybenzoate (4HB) for the ubiquinone pathway. This chain is Probable chorismate pyruvate-lyase, found in Vibrio cholerae serotype O1 (strain ATCC 39315 / El Tor Inaba N16961).